Here is a 186-residue protein sequence, read N- to C-terminus: Acireductone dioxygenase (186 aa).

Fe(2+)-binding residues include H96, H98, E102, and H140. Positions 96, 98, 102, and 140 each coordinate Ni(2+).

This sequence belongs to the acireductone dioxygenase (ARD) family. As to quaternary structure, monomer. The cofactor is Fe(2+). Requires Ni(2+) as cofactor.

It carries out the reaction 1,2-dihydroxy-5-(methylsulfanyl)pent-1-en-3-one + O2 = 3-(methylsulfanyl)propanoate + CO + formate + 2 H(+). The catalysed reaction is 1,2-dihydroxy-5-(methylsulfanyl)pent-1-en-3-one + O2 = 4-methylsulfanyl-2-oxobutanoate + formate + 2 H(+). The protein operates within amino-acid biosynthesis; L-methionine biosynthesis via salvage pathway; L-methionine from S-methyl-5-thio-alpha-D-ribose 1-phosphate: step 5/6. Its function is as follows. Catalyzes 2 different reactions between oxygen and the acireductone 1,2-dihydroxy-3-keto-5-methylthiopentene (DHK-MTPene) depending upon the metal bound in the active site. Fe-containing acireductone dioxygenase (Fe-ARD) produces formate and 2-keto-4-methylthiobutyrate (KMTB), the alpha-ketoacid precursor of methionine in the methionine recycle pathway. Ni-containing acireductone dioxygenase (Ni-ARD) produces methylthiopropionate, carbon monoxide and formate, and does not lie on the methionine recycle pathway. This chain is Acireductone dioxygenase, found in Methylococcus capsulatus (strain ATCC 33009 / NCIMB 11132 / Bath).